Here is a 361-residue protein sequence, read N- to C-terminus: Large ribosomal subunit protein uL3 (361 aa).

Residues 1 to 14 (MGRGGRRNPGRPRR) are compositionally biased toward basic residues. Disordered stretches follow at residues 1-33 (MGRGGRRNPGRPRRGSLAFSPRKRASRPVPRIR) and 337-361 (TSQQGVRPKASEDEIVEQLGGPASA).

The protein belongs to the universal ribosomal protein uL3 family. In terms of assembly, part of the 50S ribosomal subunit. Forms a cluster with proteins L14 and L24e.

In terms of biological role, one of the primary rRNA binding proteins, it binds directly near the 3'-end of the 23S rRNA, where it nucleates assembly of the 50S subunit. The sequence is that of Large ribosomal subunit protein uL3 from Methanopyrus kandleri (strain AV19 / DSM 6324 / JCM 9639 / NBRC 100938).